The primary structure comprises 265 residues: DNA repair protein RecO (265 aa).

It belongs to the RecO family.

Functionally, involved in DNA repair and RecF pathway recombination. In Mycobacterium ulcerans (strain Agy99), this protein is DNA repair protein RecO.